Consider the following 361-residue polypeptide: Phospho-N-acetylmuramoyl-pentapeptide-transferase (361 aa).

Transmembrane regions (helical) follow at residues 10-30 (PGTG…ACLI), 40-60 (LSLP…IGVP), 84-104 (GTPT…GSLV), 107-127 (GDPR…IGGI), 147-167 (LLLQ…HGAI), 175-195 (WGWL…VFLA), 206-226 (LDGL…LQLM), 232-252 (GDPA…GFLL), 260-280 (VFMG…IALL), 288-308 (LLMG…VWVF), and 341-361 (VVVS…VLVP).

Belongs to the glycosyltransferase 4 family. MraY subfamily. Requires Mg(2+) as cofactor.

The protein localises to the cell inner membrane. The catalysed reaction is UDP-N-acetyl-alpha-D-muramoyl-L-alanyl-gamma-D-glutamyl-meso-2,6-diaminopimeloyl-D-alanyl-D-alanine + di-trans,octa-cis-undecaprenyl phosphate = di-trans,octa-cis-undecaprenyl diphospho-N-acetyl-alpha-D-muramoyl-L-alanyl-D-glutamyl-meso-2,6-diaminopimeloyl-D-alanyl-D-alanine + UMP. It participates in cell wall biogenesis; peptidoglycan biosynthesis. Catalyzes the initial step of the lipid cycle reactions in the biosynthesis of the cell wall peptidoglycan: transfers peptidoglycan precursor phospho-MurNAc-pentapeptide from UDP-MurNAc-pentapeptide onto the lipid carrier undecaprenyl phosphate, yielding undecaprenyl-pyrophosphoryl-MurNAc-pentapeptide, known as lipid I. This Synechococcus sp. (strain RCC307) protein is Phospho-N-acetylmuramoyl-pentapeptide-transferase.